Consider the following 152-residue polypeptide: Large ribosomal subunit protein uL15 (152 aa).

Positions 1–54 (MGLKLNELSPGVGAKKTAHRKGRGIGSGLGKTGGRGVKGQKSRSGSGVRRGFEG) are disordered. Residues 24–37 (GIGSGLGKTGGRGV) show a composition bias toward gly residues.

This sequence belongs to the universal ribosomal protein uL15 family. Part of the 50S ribosomal subunit.

Its function is as follows. Binds to the 23S rRNA. The protein is Large ribosomal subunit protein uL15 of Psychrobacter sp. (strain PRwf-1).